A 291-amino-acid chain; its full sequence is tRNA dimethylallyltransferase (291 aa).

9-16 (GTTASGKT) provides a ligand contact to ATP. 11-16 (TASGKT) is a binding site for substrate. The segment at 34–37 (DSLC) is interaction with substrate tRNA.

This sequence belongs to the IPP transferase family. Monomer. Requires Mg(2+) as cofactor.

The catalysed reaction is adenosine(37) in tRNA + dimethylallyl diphosphate = N(6)-dimethylallyladenosine(37) in tRNA + diphosphate. Catalyzes the transfer of a dimethylallyl group onto the adenine at position 37 in tRNAs that read codons beginning with uridine, leading to the formation of N6-(dimethylallyl)adenosine (i(6)A). The polypeptide is tRNA dimethylallyltransferase (Campylobacter lari (strain RM2100 / D67 / ATCC BAA-1060)).